A 372-amino-acid polypeptide reads, in one-letter code: MSNADEPPQKTNQPPSSSLTPPSLFSLPVDIVLNILALVPKRYYPILCCVSKSLRSLIRSPEIHKTRSLHGKDSLYLCFSTRTTYPNRNRTTFHWFTLRRNDNKMNTTENVFVSIDVPYRPGHASYPLSNIAIDTEIYCIPGYNFPSSSIVWIFDTQSGQWRQGPSMQVERLSATVGLVGGKIYVIGGNRGEEILAEVFDLKTQTWEAAPIPKAKDRNEWFTHASVSLDRKVYALNSREYMNSYDTRDGSYQRYTIPEDNWWKTGKCVIDNVLFVYFLRFGLMWYDSELMLWRVVYGLDLDKARCIGIGEYYGKLAFIWGKPSNVSESKEIWCRMIGLLRSEVGIHGTEEPSQLLRIVPNNYSLRHCLSLSG.

Positions 1–13 (MSNADEPPQKTNQ) are enriched in polar residues. The disordered stretch occupies residues 1–21 (MSNADEPPQKTNQPPSSSLTP). The 47-residue stretch at 21 to 67 (PPSLFSLPVDIVLNILALVPKRYYPILCCVSKSLRSLIRSPEIHKTR) folds into the F-box domain. 2 Kelch repeats span residues 136-181 (EIYC…LVGG) and 183-228 (IYVI…SVSL).

The sequence is that of F-box/kelch-repeat protein At2g44630 from Arabidopsis thaliana (Mouse-ear cress).